Here is a 132-residue protein sequence, read N- to C-terminus: uncharacterized protein (132 aa).

Lysine 59 is covalently cross-linked (Glycyl lysine isopeptide (Lys-Gly) (interchain with G-Cter in SAMP2)).

Belongs to the OsmC/Ohr family.

This is an uncharacterized protein from Haloferax volcanii (strain ATCC 29605 / DSM 3757 / JCM 8879 / NBRC 14742 / NCIMB 2012 / VKM B-1768 / DS2) (Halobacterium volcanii).